The following is a 379-amino-acid chain: Flap endonuclease 1 (379 aa).

The segment at 1 to 105 is N-domain; the sequence is MGVKGLNQLI…GELEKRLLRR (105 aa). Asp34 contacts Mg(2+). 2 residues coordinate DNA: Arg47 and Arg71. Residues Asp87, Glu159, Glu161, Asp180, and Asp182 each contribute to the Mg(2+) site. The I-domain stretch occupies residues 123–254; that stretch reads DMVRYEKRTV…VTAFKLIKEH (132 aa). Glu159 serves as a coordination point for DNA. Gly232 and Asp234 together coordinate DNA. Position 234 (Asp234) interacts with Mg(2+). Residues 341 to 349 form an interaction with PCNA region; that stretch reads VQGRLDGFF. The disordered stretch occupies residues 344–379; sequence RLDGFFQSVPKPKDSADKKRKNDTKSAKSKKAKTRK. Residues 361–379 are compositionally biased toward basic residues; it reads KKRKNDTKSAKSKKAKTRK.

This sequence belongs to the XPG/RAD2 endonuclease family. FEN1 subfamily. Interacts with PCNA. Three molecules of FEN1 bind to one PCNA trimer with each molecule binding to one PCNA monomer. PCNA stimulates the nuclease activity without altering cleavage specificity. It depends on Mg(2+) as a cofactor. In terms of processing, phosphorylated. Phosphorylation upon DNA damage induces relocalization to the nuclear plasma.

It localises to the nucleus. It is found in the nucleolus. The protein localises to the nucleoplasm. The protein resides in the mitochondrion. In terms of biological role, structure-specific nuclease with 5'-flap endonuclease and 5'-3' exonuclease activities involved in DNA replication and repair. During DNA replication, cleaves the 5'-overhanging flap structure that is generated by displacement synthesis when DNA polymerase encounters the 5'-end of a downstream Okazaki fragment. It enters the flap from the 5'-end and then tracks to cleave the flap base, leaving a nick for ligation. Also involved in the long patch base excision repair (LP-BER) pathway, by cleaving within the apurinic/apyrimidinic (AP) site-terminated flap. Acts as a genome stabilization factor that prevents flaps from equilibrating into structures that lead to duplications and deletions. Also possesses 5'-3' exonuclease activity on nicked or gapped double-stranded DNA, and exhibits RNase H activity. Also involved in replication and repair of rDNA and in repairing mitochondrial DNA. This is Flap endonuclease 1 from Debaryomyces hansenii (strain ATCC 36239 / CBS 767 / BCRC 21394 / JCM 1990 / NBRC 0083 / IGC 2968) (Yeast).